The following is a 213-amino-acid chain: Adenylate kinase (213 aa).

10–15 (GSGKGT) provides a ligand contact to ATP. The segment at 30–59 (SVGDLLRNIISSSSELGKKIKGTVESGNLI) is NMP. Residues Arg36, 57-59 (NLI), 83-86 (GFPR), and Gln90 contribute to the AMP site. The interval 125-160 (NRLACLDCKSIYSVSSFKSTTCAKCKSTRLEKRIDD) is LID. Position 126 (Arg126) interacts with ATP. Zn(2+)-binding residues include Cys129 and Cys132. 135 to 136 (IY) is an ATP binding site. Cys146 and Cys149 together coordinate Zn(2+). AMP is bound by residues Arg157 and Arg169. Leu195 serves as a coordination point for ATP.

It belongs to the adenylate kinase family. Monomer.

The protein localises to the cytoplasm. The catalysed reaction is AMP + ATP = 2 ADP. Its pathway is purine metabolism; AMP biosynthesis via salvage pathway; AMP from ADP: step 1/1. Functionally, catalyzes the reversible transfer of the terminal phosphate group between ATP and AMP. Plays an important role in cellular energy homeostasis and in adenine nucleotide metabolism. The sequence is that of Adenylate kinase from Wolbachia sp. subsp. Drosophila simulans (strain wRi).